A 476-amino-acid chain; its full sequence is Cys-Gly metallodipeptidase dug1 (476 aa).

H99 contacts Zn(2+). D101 is a catalytic residue. D133 is a binding site for Zn(2+). Residue E167 is the Proton acceptor of the active site. Residues E168, D196, and H446 each coordinate Zn(2+).

It belongs to the peptidase M20A family. In terms of assembly, homodimer. Component of the GSH degradosomal complex. Zn(2+) is required as a cofactor. Mn(2+) serves as cofactor.

It is found in the cytoplasm. Its function is as follows. Catalytic component of the GSH degradosomal complex involved in the degradation of glutathione (GSH) and other peptides containing a gamma-glu-X bond. Has a Gly-Cys dipeptidase activity. In Schizosaccharomyces pombe (strain 972 / ATCC 24843) (Fission yeast), this protein is Cys-Gly metallodipeptidase dug1 (dug1).